The sequence spans 116 residues: Large ribosomal subunit protein uL24 (116 aa).

The protein belongs to the universal ribosomal protein uL24 family. Part of the 50S ribosomal subunit.

In terms of biological role, one of two assembly initiator proteins, it binds directly to the 5'-end of the 23S rRNA, where it nucleates assembly of the 50S subunit. Its function is as follows. Located at the polypeptide exit tunnel on the outside of the subunit. This Methanosarcina barkeri (strain Fusaro / DSM 804) protein is Large ribosomal subunit protein uL24.